The primary structure comprises 337 residues: DNA-directed RNA polymerase subunit alpha (337 aa).

An alpha N-terminal domain (alpha-NTD) region spans residues 1–233 (MIQKNWQELI…DQLALFINFK (233 aa)). An alpha C-terminal domain (alpha-CTD) region spans residues 249-337 (FNPALLKKVD…DLAKRYEDQY (89 aa)).

It belongs to the RNA polymerase alpha chain family. In terms of assembly, homodimer. The RNAP catalytic core consists of 2 alpha, 1 beta, 1 beta' and 1 omega subunit. When a sigma factor is associated with the core the holoenzyme is formed, which can initiate transcription.

It catalyses the reaction RNA(n) + a ribonucleoside 5'-triphosphate = RNA(n+1) + diphosphate. Functionally, DNA-dependent RNA polymerase catalyzes the transcription of DNA into RNA using the four ribonucleoside triphosphates as substrates. This is DNA-directed RNA polymerase subunit alpha from Bartonella henselae (strain ATCC 49882 / DSM 28221 / CCUG 30454 / Houston 1) (Rochalimaea henselae).